Consider the following 212-residue polypeptide: MVSETPEDAIVSRPEAQGCVFGVDEAGRGPLAGPVVAAAVVLGDAYPKGLDDSKKLTAKRRAVLDEDIRKTCGWGVGVVDVEEIDTLNILGATMRAMSLAVQGLAAKLGGDPDMVLIDGNLTPHGRCDLWQWEAQAIIGGDGIEPAISAASIVAKEWRDRIMTEAAQDYPEYGWLSNKGYGTAQHLEALRLHGPTPLHRRSFAPVAQQELFR.

One can recognise an RNase H type-2 domain in the interval 18 to 212 (GCVFGVDEAG…APVAQQELFR (195 aa)). D24, E25, and D118 together coordinate a divalent metal cation.

Belongs to the RNase HII family. It depends on Mn(2+) as a cofactor. Requires Mg(2+) as cofactor.

Its subcellular location is the cytoplasm. It carries out the reaction Endonucleolytic cleavage to 5'-phosphomonoester.. In terms of biological role, endonuclease that specifically degrades the RNA of RNA-DNA hybrids. This Erythrobacter litoralis (strain HTCC2594) protein is Ribonuclease HII.